Consider the following 137-residue polypeptide: Large ribosomal subunit protein uL16 (137 aa).

Residues 1-21 (MLSPKKVKFRKRQKGRLKGKA) are compositionally biased toward basic residues. The tract at residues 1–22 (MLSPKKVKFRKRQKGRLKGKAQ) is disordered.

This sequence belongs to the universal ribosomal protein uL16 family. As to quaternary structure, part of the 50S ribosomal subunit.

Functionally, binds 23S rRNA and is also seen to make contacts with the A and possibly P site tRNAs. The polypeptide is Large ribosomal subunit protein uL16 (Maridesulfovibrio salexigens (strain ATCC 14822 / DSM 2638 / NCIMB 8403 / VKM B-1763) (Desulfovibrio salexigens)).